A 2287-amino-acid polypeptide reads, in one-letter code: Protein Ycf2 (2287 aa).

1632–1639 (GSIGTGRS) is a binding site for ATP.

It belongs to the Ycf2 family.

It localises to the plastid. It is found in the chloroplast stroma. In terms of biological role, probable ATPase of unknown function. Its presence in a non-photosynthetic plant (Epifagus virginiana) and experiments in tobacco indicate that it has an essential function which is probably not related to photosynthesis. The sequence is that of Protein Ycf2 from Calycanthus floridus var. glaucus (Eastern sweetshrub).